The chain runs to 282 residues: Pantothenate synthetase (282 aa).

30-37 is an ATP binding site; sequence MGYLHEGH. The Proton donor role is filled by His-37. Residue Gln-61 participates in (R)-pantoate binding. Gln-61 contacts beta-alanine. 147-150 is an ATP binding site; sequence GMKD. Gln-153 contributes to the (R)-pantoate binding site. Residues Val-176 and 184 to 187 contribute to the ATP site; that span reads KSSR.

The protein belongs to the pantothenate synthetase family. As to quaternary structure, homodimer.

It is found in the cytoplasm. The catalysed reaction is (R)-pantoate + beta-alanine + ATP = (R)-pantothenate + AMP + diphosphate + H(+). Its pathway is cofactor biosynthesis; (R)-pantothenate biosynthesis; (R)-pantothenate from (R)-pantoate and beta-alanine: step 1/1. Functionally, catalyzes the condensation of pantoate with beta-alanine in an ATP-dependent reaction via a pantoyl-adenylate intermediate. This chain is Pantothenate synthetase, found in Bacillus thuringiensis subsp. konkukian (strain 97-27).